Reading from the N-terminus, the 734-residue chain is Photosystem I P700 chlorophyll a apoprotein A2 (734 aa).

The next 8 helical transmembrane spans lie at 46 to 69 (IFAS…FHVA), 135 to 158 (LYTG…LHLQ), 175 to 199 (LNHH…HVAI), 273 to 291 (MAHH…GHMY), 330 to 353 (IHFQ…QHMY), 369 to 395 (AALY…IFFI), 417 to 439 (AIIS…LYVH), and 517 to 535 (FLVH…LILV). Positions 559 and 568 each coordinate [4Fe-4S] cluster. The next 2 helical transmembrane spans lie at 575 to 596 (AFYL…YWHW) and 643 to 665 (LSVW…MFLI). Residues H654, M662, and Y670 each coordinate chlorophyll a. W671 lines the phylloquinone pocket. A helical membrane pass occupies residues 707–727 (LVGLAHFSVGYIFTYAAFLIA).

Belongs to the PsaA/PsaB family. As to quaternary structure, the PsaA/B heterodimer binds the P700 chlorophyll special pair and subsequent electron acceptors. PSI consists of a core antenna complex that captures photons, and an electron transfer chain that converts photonic excitation into a charge separation. The eukaryotic PSI reaction center is composed of at least 11 subunits. The cofactor is P700 is a chlorophyll a/chlorophyll a' dimer, A0 is one or more chlorophyll a, A1 is one or both phylloquinones and FX is a shared 4Fe-4S iron-sulfur center..

Its subcellular location is the plastid. It localises to the chloroplast thylakoid membrane. It carries out the reaction reduced [plastocyanin] + hnu + oxidized [2Fe-2S]-[ferredoxin] = oxidized [plastocyanin] + reduced [2Fe-2S]-[ferredoxin]. In terms of biological role, psaA and PsaB bind P700, the primary electron donor of photosystem I (PSI), as well as the electron acceptors A0, A1 and FX. PSI is a plastocyanin-ferredoxin oxidoreductase, converting photonic excitation into a charge separation, which transfers an electron from the donor P700 chlorophyll pair to the spectroscopically characterized acceptors A0, A1, FX, FA and FB in turn. Oxidized P700 is reduced on the lumenal side of the thylakoid membrane by plastocyanin. The sequence is that of Photosystem I P700 chlorophyll a apoprotein A2 from Lepidium virginicum (Virginia pepperweed).